A 152-amino-acid polypeptide reads, in one-letter code: Methylglyoxal synthase (152 aa).

In terms of domain architecture, MGS-like spans 5–152 (TRTVQAQKHI…YQLYLQQRLK (148 aa)). Substrate-binding positions include histidine 19, lysine 23, 45 to 48 (TGTT), and 65 to 66 (SG). The active-site Proton donor/acceptor is the aspartate 71. A substrate-binding site is contributed by histidine 98.

Belongs to the methylglyoxal synthase family.

The enzyme catalyses dihydroxyacetone phosphate = methylglyoxal + phosphate. In terms of biological role, catalyzes the formation of methylglyoxal from dihydroxyacetone phosphate. This Erwinia tasmaniensis (strain DSM 17950 / CFBP 7177 / CIP 109463 / NCPPB 4357 / Et1/99) protein is Methylglyoxal synthase.